Here is a 644-residue protein sequence, read N- to C-terminus: MFQDNPLLAQLKQQLHSQTPRAEGVVKATEKGFGFLEVDAQKSYFIPPPQMKKVMHGDRIVAVIHTEKERESAEPEELIEPFLTRFVGKVQGKNDRLSIVPDHPLLKDAIPCRAARGVQHEFKEGDWAVAEMRRHPLKGDRSFYADLTQYITFADDHFVPWWVTLARHNLEKEAPNGVATEMLDEGLERQDLTALNFVTIDSASTEDMDDALYAEELADGRLQLTVAIADPTAWIAEGSKLDNAAKIRAFTNYLPGFNIPMLPRELSDDLCSLRANEVRPALACRMIISADGTIDDDIAFFAATIESKAKLAYDNVSDWLENNGTWQPDNEGIAQQIRLLHRICLSRSEWRHHHALVFKDRPDYRFVLGEKGEVLDIVAEPRRIANRIVEESMIAANLCAARVLRDKLGFGIYNVHTGFDPANADALAALLKTHGLHVDAEEVLTLEGFCKLRRELDAQPSGFLDSRIRRFQSFAEISTEPGPHFGLGLEAYATWTSPIRKYGDMINHRLLKAVIKGEAIARPQEDITQQMAERRRLNRMAERDVGDWLYARFLNDKAGTNTRFAAEIIDVSRGGMRVRLVDNGAIAFIPAPFLHAVHDELVCSQENGTVQIKGETVYKVTDVIDVTIAEVRMETRSIIARPAA.

An RNB domain is found at 189-516; that stretch reads RQDLTALNFV…NHRLLKAVIK (328 aa). Positions 561 to 643 constitute an S1 motif domain; sequence NTRFAAEIID…ETRSIIARPA (83 aa).

This sequence belongs to the RNR ribonuclease family. RNase II subfamily.

Its subcellular location is the cytoplasm. The enzyme catalyses Exonucleolytic cleavage in the 3'- to 5'-direction to yield nucleoside 5'-phosphates.. Its function is as follows. Involved in mRNA degradation. Hydrolyzes single-stranded polyribonucleotides processively in the 3' to 5' direction. The polypeptide is Exoribonuclease 2 (Salmonella gallinarum (strain 287/91 / NCTC 13346)).